An 81-amino-acid chain; its full sequence is Protein Vpu (81 aa).

The Extracellular portion of the chain corresponds to 1 to 6 (MQPIQI). The chain crosses the membrane as a helical span at residues 7–27 (AIVALVVAIIIAIVVWSIVII). Residues 28–81 (EYRKILRQRKIDRLIDRLIERAEDSGNESEGEISALAEMGVEMGHHAPWDVDDL) are Cytoplasmic-facing. 2 positions are modified to phosphoserine; by host CK2: Ser52 and Ser56.

It belongs to the HIV-1 VPU protein family. In terms of assembly, homopentamer. Interacts with host CD4 and BRTC; these interactions induce proteasomal degradation of CD4. Interacts with host BST2; this interaction leads to the degradation of host BST2. Interacts with host FBXW11. Interacts with host AP1M1; this interaction plays a role in the mistrafficking and subsequent degradation of host BST2. Interacts with host RANBP2; this interaction allows Vpu to down-regulate host BLM sumoylation. Post-translationally, phosphorylated by host CK2. This phosphorylation is necessary for interaction with human BTRC and degradation of CD4.

It is found in the host membrane. Ion channel activity is inhibited by hexamethylene amiloride in vitro. In terms of biological role, enhances virion budding by targeting host CD4 and Tetherin/BST2 to proteasome degradation. Degradation of CD4 prevents any unwanted premature interactions between viral Env and its host receptor CD4 in the endoplasmic reticulum. Degradation of antiretroviral protein Tetherin/BST2 is important for virion budding, as BST2 tethers new viral particles to the host cell membrane. Mechanistically, Vpu bridges either CD4 or BST2 to BTRC, a substrate recognition subunit of the Skp1/Cullin/F-box protein E3 ubiquitin ligase, induces their ubiquitination and subsequent proteasomal degradation. The alteration of the E3 ligase specificity by Vpu seems to promote the degradation of host IKBKB, leading to NF-kappa-B down-regulation and subsequent apoptosis. Acts as a viroporin that forms an oligomeric ion channel in membranes. Modulates the host DNA repair mechanisms to promote degradation of nuclear viral cDNA in cells that are already productively infected in order to suppress immune sensing and proviral hyper-integration (superinfection). Manipulates PML-NBs and modulates SUMOylation of host BLM protein thereby enhancing its DNA-end processing activity toward viral unintegrated linear DNA. Also inhibits RAD52-mediated homologous repair of viral cDNA, preventing the generation of dead-end circular forms of single copies of the long terminal repeat and permitting sustained nucleolytic attack. The chain is Protein Vpu from Homo sapiens (Human).